The sequence spans 341 residues: N-acetyl-gamma-glutamyl-phosphate reductase (341 aa).

The active site involves cysteine 147.

This sequence belongs to the NAGSA dehydrogenase family. Type 1 subfamily.

The protein resides in the cytoplasm. It carries out the reaction N-acetyl-L-glutamate 5-semialdehyde + phosphate + NADP(+) = N-acetyl-L-glutamyl 5-phosphate + NADPH + H(+). It participates in amino-acid biosynthesis; L-arginine biosynthesis; N(2)-acetyl-L-ornithine from L-glutamate: step 3/4. Functionally, catalyzes the NADPH-dependent reduction of N-acetyl-5-glutamyl phosphate to yield N-acetyl-L-glutamate 5-semialdehyde. The polypeptide is N-acetyl-gamma-glutamyl-phosphate reductase (Dehalococcoides mccartyi (strain CBDB1)).